The following is a 555-amino-acid chain: MARVEL domain-containing protein 2 (555 aa).

The span at 1–20 (MSSSDARSRIRDRGYSEVPR) shows a compositional bias: basic and acidic residues. Residues 1–71 (MSSSDARSRI…FYSSDTEEPA (71 aa)) form a disordered region. The Cytoplasmic portion of the chain corresponds to 1 to 191 (MSSSDARSRI…YMKSWAGLLR (191 aa)). Residues 46–59 (PLPPPPLPLQPPFG) show a composition bias toward pro residues. Ser-117, Ser-121, and Ser-158 each carry phosphoserine. The segment at 118-142 (PPASPARANHHPYKDPSRGSQGTFN) is disordered. Residue Thr-163 is modified to Phosphothreonine. The MARVEL domain occupies 185-364 (SWAGLLRILG…SALVCLKLWR (180 aa)). Residues 192 to 212 (ILGVVELLLGAGVFACVTAYI) form a helical membrane-spanning segment. At 213–251 (HKDNEWYNLFGYTQPYGMGGLGSLGNTYGGYYYSGPKTP) the chain is on the extracellular side. Residues 252–272 (FVLVVAGLAWITTIIILVLGM) traverse the membrane as a helical segment. At 273–288 (SMYYRTILLDSNWWPL) the chain is on the cytoplasmic side. The helical transmembrane segment at 289-309 (TEFGVNVALFILYMAAAIVYV) threads the bilayer. Residues 310-338 (NDTNRGGLCYYPLFNTPMNAMFCRVEGGQ) lie on the Extracellular side of the membrane. The chain crosses the membrane as a helical span at residues 339 to 359 (IAAMIFLFVTMIVYLVSALVC). Residues 360–555 (LKLWRHEAAR…VMNWDTQGYP (196 aa)) are Cytoplasmic-facing. Phosphoserine is present on Ser-384. Residue Lys-408 forms a Glycyl lysine isopeptide (Lys-Gly) (interchain with G-Cter in ubiquitin) linkage. One can recognise an OCEL domain in the interval 437-548 (PDYVAKYPVI…RIQEYDKVMN (112 aa)). A coiled-coil region spans residues 521–545 (EKKERCDYLKNKLSHIKQRIQEYDK).

The protein belongs to the ELL/occludin family. In terms of assembly, interacts with TJP1. Interacts with the ubiquitin ligase ITCH. Interacts (via C-terminal cytoplasmic domain) with LSR (via the cytoplasmic domain), ILDR1 and ILDR2; the interaction is required to recruit MARVELD2 to tricellular contacts. Ubiquitinated by ITCH; but this ubiquitination does not lead to proteasomal degradation. Polyubiquitinated at Lys-408 via 'Lys-63'-linked ubiquitin chains; deubiquitinated by USP53. Post-translationally, phosphorylated. As to expression, detected in small intestine, stomach and kidney, in epithelial cells. Detected in pancreas, retina and lung, and in stria vascularis, utricle and the organ of Conti in the inner ear (at protein level). Predominantly detected in small intestine, lung and kidney, with lower levels in liver, testis and brain. In colon, expressed in the entire crypts.

The protein localises to the cell membrane. It is found in the cell junction. Its subcellular location is the tight junction. Functionally, plays a role in the formation of tricellular tight junctions and of epithelial barriers. Required for normal hearing via its role in the separation of the endolymphatic and perilymphatic spaces of the organ of Corti in the inner ear, and for normal survival of hair cells in the organ of Corti. This is MARVEL domain-containing protein 2 from Mus musculus (Mouse).